The following is a 221-amino-acid chain: ATP-dependent dethiobiotin synthetase BioD (221 aa).

Position 11-16 (11-16 (DVGKTF)) interacts with ATP. Thr15 is a Mg(2+) binding site. The active site involves Lys35. Residue Thr39 coordinates substrate. ATP contacts are provided by residues Asp44 and 103–106 (EGAG). Asp44 and Glu103 together coordinate Mg(2+).

It belongs to the dethiobiotin synthetase family. In terms of assembly, homodimer. Mg(2+) serves as cofactor.

The protein resides in the cytoplasm. It carries out the reaction (7R,8S)-7,8-diammoniononanoate + CO2 + ATP = (4R,5S)-dethiobiotin + ADP + phosphate + 3 H(+). Its pathway is cofactor biosynthesis; biotin biosynthesis; biotin from 7,8-diaminononanoate: step 1/2. Catalyzes a mechanistically unusual reaction, the ATP-dependent insertion of CO2 between the N7 and N8 nitrogen atoms of 7,8-diaminopelargonic acid (DAPA, also called 7,8-diammoniononanoate) to form a ureido ring. The polypeptide is ATP-dependent dethiobiotin synthetase BioD (Leptospira interrogans serogroup Icterohaemorrhagiae serovar copenhageni (strain Fiocruz L1-130)).